Here is a 37-residue protein sequence, read N- to C-terminus: Large ribosomal subunit protein bL36c (37 aa).

It belongs to the bacterial ribosomal protein bL36 family.

Its subcellular location is the plastid. The protein localises to the chloroplast. The chain is Large ribosomal subunit protein bL36c from Vitis vinifera (Grape).